A 1158-amino-acid chain; its full sequence is ATP-dependent helicase/deoxyribonuclease subunit B (1158 aa).

8 to 15 provides a ligand contact to ATP; sequence GRAGTGKS. Residues cysteine 791, cysteine 1112, cysteine 1115, and cysteine 1121 each coordinate [4Fe-4S] cluster.

It belongs to the helicase family. AddB/RexB type 1 subfamily. In terms of assembly, heterodimer of AddA and AddB. Requires Mg(2+) as cofactor. [4Fe-4S] cluster serves as cofactor.

The heterodimer acts as both an ATP-dependent DNA helicase and an ATP-dependent, dual-direction single-stranded exonuclease. Recognizes the chi site generating a DNA molecule suitable for the initiation of homologous recombination. The AddB subunit has 5' -&gt; 3' nuclease activity but not helicase activity. The chain is ATP-dependent helicase/deoxyribonuclease subunit B from Clostridium perfringens (strain ATCC 13124 / DSM 756 / JCM 1290 / NCIMB 6125 / NCTC 8237 / Type A).